Consider the following 529-residue polypeptide: DNA-binding protein (529 aa).

Residues 1–17 show a composition bias toward basic and acidic residues; it reads MASREEEQRETTPERGR. 2 disordered regions span residues 1-108 and 125-168; these read MASR…VDSE and PVLI…SEST. The span at 129 to 139 shows a compositional bias: basic residues; the sequence is KHGKGGKRTVR. A compositionally biased stretch (basic and acidic residues) spans 140–155; sequence RLNEDDPVARGMRTQE. Residues 156–165 are compositionally biased toward acidic residues; sequence EKEESSEAES. A Phosphotyrosine; by host modification is found at Y195. The Zn(2+) site is built by C284 and H286. The interval 297–331 is flexible loop; that stretch reads IEMDVTSENGQRALKEQSSKAKIVKNRWGRNVVQI. C339, C355, C396, C398, C450, and C467 together coordinate Zn(2+). The tract at residues 513 to 529 is C-terminal arm, DBP binding; sequence VSLPVAHSDARQNPFDF.

It belongs to the adenoviridae E2A DNA-binding protein family. Homomultimerizes on viral ssDNA bound to pTP. Forms an initiation complex with viral polymerase, pTP and hosts NFIA and POU2F1/OCT1. Interacts with host SRCAP.

The protein resides in the host nucleus. In terms of biological role, plays a role in the elongation phase of viral strand displacement replication by unwinding the template in an ATP-independent fashion, employing its capacity to form multimers. Also enhances the rate of initiation. Released from template upon second strand synthesis. Assembles in complex with viral pTP, viral pol, host NFIA and host POU2F1/OCT1 on viral origin of replication. Covers the whole ssDNA genome during synthesis. The complementary strand synthesis induces its release from DNA template. May inhibit cellular transcription mediated by the interaction between host SRCAP and CBP. In Human adenovirus C serotype 2 (HAdV-2), this protein is DNA-binding protein.